The sequence spans 248 residues: MNAVEQISGYGLSATDEPVQLPARPEPLAMKASETALIVVDMQNAYASRGGYLDLAGFDVSATQPVIAKIRQALNAARAAGMQVIFLQNGWDNGYVEAGGPGSPNWHKSNALKTMRKRPELAGTLLAKGGWDYALVDELAPQPGDILVPKPRYSGFFNSQLDSTLRARGIRNLVFTGIATNVCVESTLRDGFHLEYFGVVLADATHQAGPEFAQQAALYNIETFFGWVSSVDAFCQSFAAAPEVAVAS.

The active-site Proton acceptor is D41. The active site involves K150. C183 acts as the Nucleophile in catalysis.

Belongs to the isochorismatase family. RutB subfamily.

The enzyme catalyses (Z)-3-ureidoacrylate + H2O + H(+) = (Z)-3-aminoacrylate + NH4(+) + CO2. It carries out the reaction (Z)-3-ureidoacrylate + H2O = (Z)-3-aminoacrylate + carbamate + H(+). It catalyses the reaction (Z)-2-methylureidoacrylate + H2O + H(+) = (Z)-2-methylaminoacrylate + NH4(+) + CO2. Hydrolyzes ureidoacrylate to form aminoacrylate and carbamate. The carbamate hydrolyzes spontaneously, thereby releasing one of the nitrogen atoms of the pyrimidine ring as ammonia and one of its carbon atoms as CO2. The polypeptide is Ureidoacrylate amidohydrolase RutB (Stutzerimonas stutzeri (strain A1501) (Pseudomonas stutzeri)).